A 107-amino-acid polypeptide reads, in one-letter code: Glutaredoxin 4 (107 aa).

A Glutaredoxin domain is found at 4–106 (LDKIKKQISE…TLLAEVAAKH (103 aa)). Residue Lys21 coordinates glutathione. Residue Cys29 coordinates [2Fe-2S] cluster. Glutathione-binding positions include Arg58, Phe70, and 83–84 (CD).

This sequence belongs to the glutaredoxin family. Monothiol subfamily. Homodimer.

The protein resides in the cytoplasm. Monothiol glutaredoxin involved in the biogenesis of iron-sulfur clusters. In Haemophilus influenzae (strain 86-028NP), this protein is Glutaredoxin 4 (grxD).